Reading from the N-terminus, the 356-residue chain is UDP-N-acetylglucosamine--N-acetylmuramyl-(pentapeptide) pyrophosphoryl-undecaprenol N-acetylglucosamine transferase (356 aa).

UDP-N-acetyl-alpha-D-glucosamine is bound by residues 15 to 17 (TGG), Asn127, Arg163, Ser191, Ile244, 263 to 268 (ALTVSE), and Gln288.

Belongs to the glycosyltransferase 28 family. MurG subfamily.

It is found in the cell inner membrane. The catalysed reaction is di-trans,octa-cis-undecaprenyl diphospho-N-acetyl-alpha-D-muramoyl-L-alanyl-D-glutamyl-meso-2,6-diaminopimeloyl-D-alanyl-D-alanine + UDP-N-acetyl-alpha-D-glucosamine = di-trans,octa-cis-undecaprenyl diphospho-[N-acetyl-alpha-D-glucosaminyl-(1-&gt;4)]-N-acetyl-alpha-D-muramoyl-L-alanyl-D-glutamyl-meso-2,6-diaminopimeloyl-D-alanyl-D-alanine + UDP + H(+). It participates in cell wall biogenesis; peptidoglycan biosynthesis. Functionally, cell wall formation. Catalyzes the transfer of a GlcNAc subunit on undecaprenyl-pyrophosphoryl-MurNAc-pentapeptide (lipid intermediate I) to form undecaprenyl-pyrophosphoryl-MurNAc-(pentapeptide)GlcNAc (lipid intermediate II). In Klebsiella pneumoniae subsp. pneumoniae (strain ATCC 700721 / MGH 78578), this protein is UDP-N-acetylglucosamine--N-acetylmuramyl-(pentapeptide) pyrophosphoryl-undecaprenol N-acetylglucosamine transferase.